The sequence spans 65 residues: Large ribosomal subunit protein bL35 (65 aa).

Disordered stretches follow at residues 1-23 and 29-48; these read MPKIKTNRAAAKRFKKTGSGKVK and GSHILAKKSRKRKRDLRQSH. Residues 33–43 are compositionally biased toward basic residues; sequence LAKKSRKRKRD.

This sequence belongs to the bacterial ribosomal protein bL35 family.

The protein is Large ribosomal subunit protein bL35 of Desulfatibacillum aliphaticivorans.